Reading from the N-terminus, the 303-residue chain is uncharacterized protein (303 aa).

Residues 7 to 12 and Asn101 contribute to the NADP(+) site; that span reads GAGGVG. Catalysis depends on Lys184, which acts as the Proton donor. Glu267 serves as a coordination point for NADP(+).

The protein belongs to the ketopantoate reductase family.

This is an uncharacterized protein from Bacillus subtilis (strain 168).